Consider the following 431-residue polypeptide: Enolase (431 aa).

(2R)-2-phosphoglycerate is bound at residue glutamine 167. The active-site Proton donor is the glutamate 209. Positions 246, 289, and 316 each coordinate Mg(2+). (2R)-2-phosphoglycerate-binding residues include lysine 341, arginine 370, serine 371, and lysine 392. Lysine 341 functions as the Proton acceptor in the catalytic mechanism.

Belongs to the enolase family. In terms of assembly, component of the RNA degradosome, a multiprotein complex involved in RNA processing and mRNA degradation. Mg(2+) is required as a cofactor.

The protein resides in the cytoplasm. The protein localises to the secreted. Its subcellular location is the cell surface. The catalysed reaction is (2R)-2-phosphoglycerate = phosphoenolpyruvate + H2O. It functions in the pathway carbohydrate degradation; glycolysis; pyruvate from D-glyceraldehyde 3-phosphate: step 4/5. Functionally, catalyzes the reversible conversion of 2-phosphoglycerate (2-PG) into phosphoenolpyruvate (PEP). It is essential for the degradation of carbohydrates via glycolysis. In Shewanella woodyi (strain ATCC 51908 / MS32), this protein is Enolase.